Consider the following 271-residue polypeptide: Zinc finger CCHC domain-containing protein 9 (271 aa).

The segment at 1 to 67 (MTRWARVTTS…RKKNKKKKEY (67 aa)) is disordered. Over residues 7–20 (VTTSNSKRPLSATS) the composition is skewed to polar residues. Positions 22–33 (EDMKKGSVERAD) are enriched in basic and acidic residues. Positions 35–46 (SLPNRKQCQSSR) are enriched in polar residues. Residues 56 to 65 (AKRKKNKKKK) are compositionally biased toward basic residues. CCHC-type zinc fingers lie at residues 128-145 (MVCFHCRQPGHGIADCPA), 155-172 (GICYRCGSTEHEMSKCRA), 184-201 (AKCFVCGEMGHLSRSCPD), and 211-228 (GSCKLCGSVEHFKKDCRE).

In terms of tissue distribution, detected in brain cortex and in testis.

The protein resides in the nucleus. The protein localises to the nucleolus. Its function is as follows. May down-regulate transcription mediated by NF-kappa-B and the serum response element. This Mus musculus (Mouse) protein is Zinc finger CCHC domain-containing protein 9 (Zcchc9).